The sequence spans 494 residues: UDP-glucose 6-dehydrogenase (494 aa).

NAD(+)-binding positions include 11 to 16 (GAGYVG), aspartate 36, arginine 41, 89 to 93 (VNTPT), and 130 to 132 (STV). The tract at residues 88-110 (SVNTPTKTYGMGKGRAADLKYIE) is disordered. Residues 129–135 (KSTVPVR) are allosteric switch region. Glutamate 161 serves as the catalytic Proton donor/acceptor. Substrate-binding positions include 161-165 (EFLAE), 220-224 (KLAAN), arginine 260, and 267-273 (KASVGFG). Residue glutamate 165 coordinates NAD(+). Lysine 220 serves as the catalytic Proton donor/acceptor. Cysteine 276 acts as the Nucleophile in catalysis. Residue 276–279 (CFQK) participates in NAD(+) binding. The tract at residues 321–325 (SLFNT) is important for formation of active hexamer structure. 338-339 (FK) contacts substrate. Position 346 (arginine 346) interacts with NAD(+). Position 442 (arginine 442) interacts with substrate. Residues 466–494 (VSAKRIPFASSCEIPKFSLQDPPVKKPRV) form a disordered region.

Belongs to the UDP-glucose/GDP-mannose dehydrogenase family. Homohexamer.

It carries out the reaction UDP-alpha-D-glucose + 2 NAD(+) + H2O = UDP-alpha-D-glucuronate + 2 NADH + 3 H(+). It functions in the pathway nucleotide-sugar biosynthesis; UDP-alpha-D-glucuronate biosynthesis; UDP-alpha-D-glucuronate from UDP-alpha-D-glucose: step 1/1. Its activity is regulated as follows. UDP-alpha-D-xylose (UDX) acts as a feedback inhibitor. It binds at the same site as the substrate, but functions as allosteric inhibitor by triggering a conformation change that disrupts the active hexameric ring structure and gives rise to an inactive, horseshoe-shaped hexamer. In terms of biological role, catalyzes the formation of UDP-alpha-D-glucuronate, a constituent of complex glycosaminoglycans. Required for the biosynthesis of chondroitin sulfate and heparan sulfate. Required for embryonic development via its role in the biosynthesis of glycosaminoglycans. This is UDP-glucose 6-dehydrogenase (UGDH) from Gallus gallus (Chicken).